Here is a 292-residue protein sequence, read N- to C-terminus: Probable xyloglucan endotransglucosylase/hydrolase protein 6 (292 aa).

Residues 1-30 (MAKIYSPSFPGTLCLCIFTLLTLMFIRVSA) form the signal peptide. The GH16 domain maps to 31–224 (RPATFVEDFK…WSKAPFYAYY (194 aa)). Glu110 serves as the catalytic Nucleophile. Glu114 acts as the Proton donor in catalysis. Glu114 contacts xyloglucan. Asn118 carries N-linked (GlcNAc...) asparagine glycosylation. Residues 127–129 (QTN), 137–139 (DRE), 203–204 (DW), and Gly208 contribute to the xyloglucan site. 2 cysteine pairs are disulfide-bonded: Cys232–Cys240 and Cys277–Cys290. Position 282 (Arg282) interacts with xyloglucan.

Belongs to the glycosyl hydrolase 16 family. XTH group 1 subfamily. Post-translationally, contains at least one intrachain disulfide bond essential for its enzymatic activity.

The protein localises to the secreted. The protein resides in the cell wall. Its subcellular location is the extracellular space. It is found in the apoplast. The enzyme catalyses breaks a beta-(1-&gt;4) bond in the backbone of a xyloglucan and transfers the xyloglucanyl segment on to O-4 of the non-reducing terminal glucose residue of an acceptor, which can be a xyloglucan or an oligosaccharide of xyloglucan.. In terms of biological role, catalyzes xyloglucan endohydrolysis (XEH) and/or endotransglycosylation (XET). Cleaves and religates xyloglucan polymers, an essential constituent of the primary cell wall, and thereby participates in cell wall construction of growing tissues. The protein is Probable xyloglucan endotransglucosylase/hydrolase protein 6 (XTH6) of Arabidopsis thaliana (Mouse-ear cress).